The sequence spans 110 residues: MALWMRFLPLLALLFLWESHPTQAFVKQHLCGSHLVEALYLVCGERGFFYTPMSRREVEDPQVAQLELGGGPGAGDLQTLALEVAQQKRGIVDQCCTSICSLYQLENYCN.

Positions Met-1 to Ala-24 are cleaved as a signal peptide. Cystine bridges form between Cys-31/Cys-96, Cys-43/Cys-109, and Cys-95/Cys-100. Residues Glu-57 to Gln-87 constitute a propeptide, c peptide.

This sequence belongs to the insulin family. In terms of assembly, heterodimer of a B chain and an A chain linked by two disulfide bonds.

Its subcellular location is the secreted. Functionally, insulin decreases blood glucose concentration. It increases cell permeability to monosaccharides, amino acids and fatty acids. It accelerates glycolysis, the pentose phosphate cycle, and glycogen synthesis in liver. In Mus musculus (Mouse), this protein is Insulin-2 (Ins2).